A 102-amino-acid chain; its full sequence is NADH-quinone oxidoreductase subunit K (102 aa).

The next 3 membrane-spanning stretches (helical) occupy residues 6–26 (MEHGLALAAALFCIGLVGLMV), 30–50 (ILFILMSLEVMMNAAALAFVV), and 62–82 (VMFIMVITLAAAEASIGLAIL).

The protein belongs to the complex I subunit 4L family. In terms of assembly, NDH-1 is composed of 13 different subunits. Subunits NuoA, H, J, K, L, M, N constitute the membrane sector of the complex.

The protein localises to the cell inner membrane. It catalyses the reaction a quinone + NADH + 5 H(+)(in) = a quinol + NAD(+) + 4 H(+)(out). NDH-1 shuttles electrons from NADH, via FMN and iron-sulfur (Fe-S) centers, to quinones in the respiratory chain. The immediate electron acceptor for the enzyme in this species is believed to be ubiquinone. Couples the redox reaction to proton translocation (for every two electrons transferred, four hydrogen ions are translocated across the cytoplasmic membrane), and thus conserves the redox energy in a proton gradient. The polypeptide is NADH-quinone oxidoreductase subunit K (Ectopseudomonas mendocina (strain ymp) (Pseudomonas mendocina)).